The sequence spans 331 residues: NADH-quinone oxidoreductase subunit H (331 aa).

The next 8 membrane-spanning stretches (helical) occupy residues 13–33, 80–100, 113–133, 159–179, 183–203, 249–269, 273–293, and 311–331; these read FLIS…VLTL, WVFL…WLVI, IGLV…IMAG, LILS…VDIV, AGGF…AFFV, VMSA…LPFL, VFNW…FQWI, and KILV…MLVI.

The protein belongs to the complex I subunit 1 family. NDH-1 is composed of 14 different subunits. Subunits NuoA, H, J, K, L, M, N constitute the membrane sector of the complex.

It localises to the cell membrane. The catalysed reaction is a quinone + NADH + 5 H(+)(in) = a quinol + NAD(+) + 4 H(+)(out). In terms of biological role, NDH-1 shuttles electrons from NADH, via FMN and iron-sulfur (Fe-S) centers, to quinones in the respiratory chain. The immediate electron acceptor for the enzyme in this species is believed to be ubiquinone. Couples the redox reaction to proton translocation (for every two electrons transferred, four hydrogen ions are translocated across the cytoplasmic membrane), and thus conserves the redox energy in a proton gradient. This subunit may bind ubiquinone. This chain is NADH-quinone oxidoreductase subunit H, found in Rubrobacter xylanophilus (strain DSM 9941 / JCM 11954 / NBRC 16129 / PRD-1).